The chain runs to 291 residues: ATP synthase gamma chain (291 aa).

This sequence belongs to the ATPase gamma chain family. As to quaternary structure, F-type ATPases have 2 components, CF(1) - the catalytic core - and CF(0) - the membrane proton channel. CF(1) has five subunits: alpha(3), beta(3), gamma(1), delta(1), epsilon(1). CF(0) has three main subunits: a, b and c.

It is found in the cell inner membrane. Its function is as follows. Produces ATP from ADP in the presence of a proton gradient across the membrane. The gamma chain is believed to be important in regulating ATPase activity and the flow of protons through the CF(0) complex. The sequence is that of ATP synthase gamma chain from Nitratidesulfovibrio vulgaris (strain ATCC 29579 / DSM 644 / CCUG 34227 / NCIMB 8303 / VKM B-1760 / Hildenborough) (Desulfovibrio vulgaris).